The chain runs to 215 residues: Ribose-5-phosphate isomerase A (215 aa).

Substrate contacts are provided by residues Thr26–Thr29, Asp79–Asp82, and Lys92–Gly95. Glu101 acts as the Proton acceptor in catalysis. Lys119 is a substrate binding site.

The protein belongs to the ribose 5-phosphate isomerase family. Homodimer.

The enzyme catalyses aldehydo-D-ribose 5-phosphate = D-ribulose 5-phosphate. The protein operates within carbohydrate degradation; pentose phosphate pathway; D-ribose 5-phosphate from D-ribulose 5-phosphate (non-oxidative stage): step 1/1. In terms of biological role, catalyzes the reversible conversion of ribose-5-phosphate to ribulose 5-phosphate. The polypeptide is Ribose-5-phosphate isomerase A (Xylella fastidiosa (strain Temecula1 / ATCC 700964)).